A 124-amino-acid polypeptide reads, in one-letter code: Multifunctional methyltransferase subunit TRM112 homolog B (124 aa).

The region spanning 2 to 120 (RLIVHNMLSC…SKGIPNMLLH (119 aa)) is the TRM112 domain.

The protein belongs to the TRM112 family. Interacts with TRM9. In terms of tissue distribution, expressed in anthers.

Its function is as follows. Acts as an activator of both rRNA/tRNA and protein methyltransferases. Required for TRM9 tRNA methyltransferase activity. The polypeptide is Multifunctional methyltransferase subunit TRM112 homolog B (Arabidopsis thaliana (Mouse-ear cress)).